A 269-amino-acid chain; its full sequence is Formamidopyrimidine-DNA glycosylase (269 aa).

The Schiff-base intermediate with DNA role is filled by proline 2. The active-site Proton donor is glutamate 3. Lysine 57 acts as the Proton donor; for beta-elimination activity in catalysis. Histidine 90, arginine 109, and lysine 150 together coordinate DNA. The segment at 235–269 (QVYGRAGELCRRCGNVIEIAKHGQRSTFFCRHCQH) adopts an FPG-type zinc-finger fold. The Proton donor; for delta-elimination activity role is filled by arginine 259.

This sequence belongs to the FPG family. Monomer. The cofactor is Zn(2+).

The catalysed reaction is Hydrolysis of DNA containing ring-opened 7-methylguanine residues, releasing 2,6-diamino-4-hydroxy-5-(N-methyl)formamidopyrimidine.. It carries out the reaction 2'-deoxyribonucleotide-(2'-deoxyribose 5'-phosphate)-2'-deoxyribonucleotide-DNA = a 3'-end 2'-deoxyribonucleotide-(2,3-dehydro-2,3-deoxyribose 5'-phosphate)-DNA + a 5'-end 5'-phospho-2'-deoxyribonucleoside-DNA + H(+). Functionally, involved in base excision repair of DNA damaged by oxidation or by mutagenic agents. Acts as a DNA glycosylase that recognizes and removes damaged bases. Has a preference for oxidized purines, such as 7,8-dihydro-8-oxoguanine (8-oxoG). Has AP (apurinic/apyrimidinic) lyase activity and introduces nicks in the DNA strand. Cleaves the DNA backbone by beta-delta elimination to generate a single-strand break at the site of the removed base with both 3'- and 5'-phosphates. The chain is Formamidopyrimidine-DNA glycosylase from Yersinia enterocolitica serotype O:8 / biotype 1B (strain NCTC 13174 / 8081).